The chain runs to 435 residues: Methylenetetrahydrofolate--tRNA-(uracil-5-)-methyltransferase TrmFO (435 aa).

7–12 contributes to the FAD binding site; the sequence is GAGLAG.

The protein belongs to the MnmG family. TrmFO subfamily. The cofactor is FAD.

The protein resides in the cytoplasm. The catalysed reaction is uridine(54) in tRNA + (6R)-5,10-methylene-5,6,7,8-tetrahydrofolate + NADH + H(+) = 5-methyluridine(54) in tRNA + (6S)-5,6,7,8-tetrahydrofolate + NAD(+). It catalyses the reaction uridine(54) in tRNA + (6R)-5,10-methylene-5,6,7,8-tetrahydrofolate + NADPH + H(+) = 5-methyluridine(54) in tRNA + (6S)-5,6,7,8-tetrahydrofolate + NADP(+). In terms of biological role, catalyzes the folate-dependent formation of 5-methyl-uridine at position 54 (M-5-U54) in all tRNAs. The polypeptide is Methylenetetrahydrofolate--tRNA-(uracil-5-)-methyltransferase TrmFO (Thermotoga neapolitana (strain ATCC 49049 / DSM 4359 / NBRC 107923 / NS-E)).